A 648-amino-acid chain; its full sequence is Biosynthetic arginine decarboxylase (648 aa).

K109 is subject to N6-(pyridoxal phosphate)lysine. 291–301 (IDVGGGLGIDF) contributes to the substrate binding site.

Belongs to the Orn/Lys/Arg decarboxylase class-II family. SpeA subfamily. Mg(2+) serves as cofactor. The cofactor is pyridoxal 5'-phosphate.

It carries out the reaction L-arginine + H(+) = agmatine + CO2. Its pathway is amine and polyamine biosynthesis; agmatine biosynthesis; agmatine from L-arginine: step 1/1. Functionally, catalyzes the biosynthesis of agmatine from arginine. This chain is Biosynthetic arginine decarboxylase, found in Prochlorococcus marinus (strain MIT 9312).